The chain runs to 121 residues: Securin (121 aa).

Positions 1–24 are disordered; it reads RATEKSVKTNGPLKQKQTTFSAKK. 2 short sequence motifs (TEK-box) span residues 3–5 and 26–28; these read TEK. The segment at 93–121 is disordered; it reads LGPPSPLNMPSPPWESDVLQSPSSILSTL. The SH3-binding motif lies at 95-105; that stretch reads PPSPLNMPSPP. Pro residues predominate over residues 95–105; it reads PPSPLNMPSPP. Phosphoserine; by CDK1 is present on S97. Residues 110–121 show a composition bias toward polar residues; sequence VLQSPSSILSTL.

The protein belongs to the securin family. In terms of assembly, interacts with the caspase-like ESPL1, and prevents its protease activity probably by covering its active site. Interacts with p53/TP53 and blocks its activity probably by blocking its binding to DNA. Interacts with the Ku 70 kDa subunit of ds-DNA kinase. Interacts with PTTG1IP. Interacts with RPS10 and DNAJA1. Post-translationally, phosphorylated by CDK1 during mitosis. Phosphorylated in vitro by ds-DNA kinase. In terms of processing, ubiquitinated through 'Lys-11' linkage of ubiquitin moieties by the anaphase promoting complex (APC) at the onset of anaphase, conducting to its degradation. 'Lys-11'-linked ubiquitination is mediated by the E2 ligase UBE2C/UBCH10.

Its subcellular location is the cytoplasm. The protein resides in the nucleus. Functionally, regulatory protein, which plays a central role in chromosome stability, in the p53/TP53 pathway, and DNA repair. Probably acts by blocking the action of key proteins. During the mitosis, it blocks Separase/ESPL1 function, preventing the proteolysis of the cohesin complex and the subsequent segregation of the chromosomes. At the onset of anaphase, it is ubiquitinated, conducting to its destruction and to the liberation of ESPL1. Its function is however not limited to a blocking activity, since it is required to activate ESPL1. Negatively regulates the transcriptional activity and related apoptosis activity of p53/TP53. The negative regulation of p53/TP53 may explain the strong transforming capability of the protein when it is overexpressed. May also play a role in DNA repair via its interaction with Ku, possibly by connecting DNA damage-response pathways with sister chromatid separation. This chain is Securin (PTTG1), found in Sus scrofa (Pig).